A 292-amino-acid chain; its full sequence is 2-(5''-triphosphoribosyl)-3'-dephosphocoenzyme-A synthase (292 aa).

The protein belongs to the CitG/MdcB family.

The enzyme catalyses 3'-dephospho-CoA + ATP = 2'-(5''-triphospho-alpha-D-ribosyl)-3'-dephospho-CoA + adenine. In terms of biological role, catalyzes the formation of 2-(5''-triphosphoribosyl)-3'-dephosphocoenzyme-A, the precursor of the prosthetic group of the holo-acyl carrier protein (gamma chain) of citrate lyase, from ATP and dephospho-CoA. The protein is 2-(5''-triphosphoribosyl)-3'-dephosphocoenzyme-A synthase of Escherichia coli O127:H6 (strain E2348/69 / EPEC).